The primary structure comprises 189 residues: Lipid A acyltransferase PagP (189 aa).

Positions 1–23 (MRLKLILYFLILSCYLGIGSARA) are cleaved as a signal peptide. Active-site residues include histidine 61, aspartate 104, and serine 105.

Belongs to the lipid A palmitoyltransferase family. Homodimer.

Its subcellular location is the cell outer membrane. It catalyses the reaction a lipid A + a 1,2-diacyl-sn-glycero-3-phosphocholine = a hepta-acyl lipid A + a 2-acyl-sn-glycero-3-phosphocholine. The catalysed reaction is a lipid IVA + a 1,2-diacyl-sn-glycero-3-phosphocholine = a lipid IVB + a 2-acyl-sn-glycero-3-phosphocholine. It carries out the reaction a lipid IIA + a 1,2-diacyl-sn-glycero-3-phosphocholine = a lipid IIB + a 2-acyl-sn-glycero-3-phosphocholine. Its function is as follows. Transfers a fatty acid residue from the sn-1 position of a phospholipid to the N-linked hydroxyfatty acid chain on the proximal unit of lipid A or its precursors. The polypeptide is Lipid A acyltransferase PagP (Erwinia tasmaniensis (strain DSM 17950 / CFBP 7177 / CIP 109463 / NCPPB 4357 / Et1/99)).